A 233-amino-acid polypeptide reads, in one-letter code: Zinc metalloproteinase recombinant fibrinogenase II (233 aa).

Residues 19–215 (KYVETVFVVD…HNPECIDNEP (197 aa)) enclose the Peptidase M12B domain. Residues Glu22 and Asp106 each coordinate Ca(2+). 3 cysteine pairs are disulfide-bonded: Cys130–Cys210, Cys170–Cys194, and Cys172–Cys177. His155 contributes to the Zn(2+) binding site. Glu156 is an active-site residue. The Zn(2+) site is built by His159 and His165. N-linked (GlcNAc...) asparagine glycosylation occurs at Asn193. Ca(2+) contacts are provided by Cys210, Asn213, Asn228, Leu230, and Glu232.

Belongs to the venom metalloproteinase (M12B) family. P-III subfamily. Zn(2+) serves as cofactor. In terms of tissue distribution, expressed by the venom gland.

Its subcellular location is the secreted. Its activity is regulated as follows. Inhibited by PMSF and EDTA. Slightly inhibited by Cu(2+) and Zn(2+). Not inhibited by aprotinin, SBTI, Ca(2+), Mg(2+), Na(+) and K(+). Functionally, snake venom zinc metalloprotease that acts at several levels. It has direct fibrino(geno)lytic activity (Aalpha chain of fibrinogen is cleaved quickly, Bbeta chain slowly, and gamma chain even more slowly) and degradation of TNF-alpha. These activities permit to protect against sepsis and disseminated intravascular coagulation. It inhibits ADP-induced platelet aggregation in human platelet-rich plasma (IC(50)=65.4 ug/ml). It decreases the activity of complement by degrading human C5, C6 and C9 in vitro, decreasing serum levels of C1q, C3 and C4 in rat, and inhibiting the MAC deposition on HUVECs membrane. This inhibition of complement protects against hyperacute rejection that is the main barrier in xenotransplantation. Has preference for Lys at the P1 position. Cleaves insulin B chain at '36-Val-|-Glu-37', '39-Leu-|-Tyr-40', and '48-Phe-|-Phe-49' bonds. Also cleaves fibronectin and type IV collagen. This chain is Zinc metalloproteinase recombinant fibrinogenase II, found in Deinagkistrodon acutus (Hundred-pace snake).